The sequence spans 126 residues: MHRSHRLKKNEQFQAVFQRGSSAANKQFVLYSAKQEGQAAFRAGISVSKKIGNAVVRNRVKRLIREAVARMESDIPVGLDLVIIARPGVEAMTLEAIEQSLLHVMKRAKVIKQAPVHNGKRDGKRG.

It belongs to the RnpA family. As to quaternary structure, consists of a catalytic RNA component (M1 or rnpB) and a protein subunit.

It carries out the reaction Endonucleolytic cleavage of RNA, removing 5'-extranucleotides from tRNA precursor.. Its function is as follows. RNaseP catalyzes the removal of the 5'-leader sequence from pre-tRNA to produce the mature 5'-terminus. It can also cleave other RNA substrates such as 4.5S RNA. The protein component plays an auxiliary but essential role in vivo by binding to the 5'-leader sequence and broadening the substrate specificity of the ribozyme. The protein is Ribonuclease P protein component of Brevibacillus brevis (strain 47 / JCM 6285 / NBRC 100599).